Here is a 263-residue protein sequence, read N- to C-terminus: Type III pantothenate kinase (263 aa).

Residue 6 to 13 (DVGNTNIK) participates in ATP binding. Substrate is bound at residue 108–111 (GSDR). Catalysis depends on D110, which acts as the Proton acceptor. D131 contributes to the K(+) binding site. ATP is bound at residue T134. Position 187 (T187) interacts with substrate.

It belongs to the type III pantothenate kinase family. As to quaternary structure, homodimer. Requires NH4(+) as cofactor. The cofactor is K(+).

It localises to the cytoplasm. It catalyses the reaction (R)-pantothenate + ATP = (R)-4'-phosphopantothenate + ADP + H(+). It functions in the pathway cofactor biosynthesis; coenzyme A biosynthesis; CoA from (R)-pantothenate: step 1/5. Functionally, catalyzes the phosphorylation of pantothenate (Pan), the first step in CoA biosynthesis. The chain is Type III pantothenate kinase from Anaplasma phagocytophilum (strain HZ).